We begin with the raw amino-acid sequence, 250 residues long: Insertion sequence IS232 putative ATP-binding protein (250 aa).

ATP is bound at residue 108–115 (GPSGVGKT).

The protein belongs to the IS21/IS1162 putative ATP-binding protein family.

In Bacillus thuringiensis subsp. berliner, this protein is Insertion sequence IS232 putative ATP-binding protein.